The chain runs to 186 residues: Crossover junction endodeoxyribonuclease RuvC (186 aa).

Catalysis depends on residues Asp7, Glu67, and Asp140. Mg(2+)-binding residues include Asp7, Glu67, and Asp140.

Belongs to the RuvC family. As to quaternary structure, homodimer which binds Holliday junction (HJ) DNA. The HJ becomes 2-fold symmetrical on binding to RuvC with unstacked arms; it has a different conformation from HJ DNA in complex with RuvA. In the full resolvosome a probable DNA-RuvA(4)-RuvB(12)-RuvC(2) complex forms which resolves the HJ. Mg(2+) serves as cofactor.

It localises to the cytoplasm. The catalysed reaction is Endonucleolytic cleavage at a junction such as a reciprocal single-stranded crossover between two homologous DNA duplexes (Holliday junction).. Functionally, the RuvA-RuvB-RuvC complex processes Holliday junction (HJ) DNA during genetic recombination and DNA repair. Endonuclease that resolves HJ intermediates. Cleaves cruciform DNA by making single-stranded nicks across the HJ at symmetrical positions within the homologous arms, yielding a 5'-phosphate and a 3'-hydroxyl group; requires a central core of homology in the junction. The consensus cleavage sequence is 5'-(A/T)TT(C/G)-3'. Cleavage occurs on the 3'-side of the TT dinucleotide at the point of strand exchange. HJ branch migration catalyzed by RuvA-RuvB allows RuvC to scan DNA until it finds its consensus sequence, where it cleaves and resolves the cruciform DNA. In Chloroherpeton thalassium (strain ATCC 35110 / GB-78), this protein is Crossover junction endodeoxyribonuclease RuvC.